Here is a 264-residue protein sequence, read N- to C-terminus: Thymidylate synthase (264 aa).

Arginine 21 contacts dUMP. A (6R)-5,10-methylene-5,6,7,8-tetrahydrofolate-binding site is contributed by histidine 51. Residue 126-127 (RR) coordinates dUMP. Cysteine 146 acts as the Nucleophile in catalysis. Residues 166–169 (RSCD), asparagine 177, and 207–209 (HLY) contribute to the dUMP site. (6R)-5,10-methylene-5,6,7,8-tetrahydrofolate is bound at residue aspartate 169. Residue alanine 263 participates in (6R)-5,10-methylene-5,6,7,8-tetrahydrofolate binding.

The protein belongs to the thymidylate synthase family. Bacterial-type ThyA subfamily. Homodimer.

The protein resides in the cytoplasm. It carries out the reaction dUMP + (6R)-5,10-methylene-5,6,7,8-tetrahydrofolate = 7,8-dihydrofolate + dTMP. The protein operates within pyrimidine metabolism; dTTP biosynthesis. Functionally, catalyzes the reductive methylation of 2'-deoxyuridine-5'-monophosphate (dUMP) to 2'-deoxythymidine-5'-monophosphate (dTMP) while utilizing 5,10-methylenetetrahydrofolate (mTHF) as the methyl donor and reductant in the reaction, yielding dihydrofolate (DHF) as a by-product. This enzymatic reaction provides an intracellular de novo source of dTMP, an essential precursor for DNA biosynthesis. The polypeptide is Thymidylate synthase (Serratia proteamaculans (strain 568)).